The following is a 108-amino-acid chain: Nucleoid-associated protein BQ02190 (108 aa).

It belongs to the YbaB/EbfC family. Homodimer.

It is found in the cytoplasm. The protein resides in the nucleoid. Binds to DNA and alters its conformation. May be involved in regulation of gene expression, nucleoid organization and DNA protection. This is Nucleoid-associated protein BQ02190 from Bartonella quintana (strain Toulouse) (Rochalimaea quintana).